The sequence spans 143 residues: Small ribosomal subunit protein uS9A (143 aa).

Position 2 is an N-acetylserine (Ser2). Residue Lys30 forms a Glycyl lysine isopeptide (Lys-Gly) (interchain with G-Cter in ubiquitin) linkage. Residue Ser34 is modified to Phosphoserine. Glycyl lysine isopeptide (Lys-Gly) (interchain with G-Cter in ubiquitin) cross-links involve residues Lys47 and Lys59. Ser61 carries the post-translational modification Phosphoserine. At Thr70 the chain carries Phosphothreonine. Ser76 bears the Phosphoserine mark. Residues 123 to 143 (RPEPKKFGGKGARSRFQKSYR) are disordered. The segment covering 134 to 143 (ARSRFQKSYR) has biased composition (basic residues).

The protein belongs to the universal ribosomal protein uS9 family. As to quaternary structure, component of the small ribosomal subunit (SSU). Mature yeast ribosomes consist of a small (40S) and a large (60S) subunit. The 40S small subunit contains 1 molecule of ribosomal RNA (18S rRNA) and 33 different proteins (encoded by 57 genes). The large 60S subunit contains 3 rRNA molecules (25S, 5.8S and 5S rRNA) and 46 different proteins (encoded by 81 genes).

Its subcellular location is the cytoplasm. Functionally, component of the ribosome, a large ribonucleoprotein complex responsible for the synthesis of proteins in the cell. The small ribosomal subunit (SSU) binds messenger RNAs (mRNAs) and translates the encoded message by selecting cognate aminoacyl-transfer RNA (tRNA) molecules. The large subunit (LSU) contains the ribosomal catalytic site termed the peptidyl transferase center (PTC), which catalyzes the formation of peptide bonds, thereby polymerizing the amino acids delivered by tRNAs into a polypeptide chain. The nascent polypeptides leave the ribosome through a tunnel in the LSU and interact with protein factors that function in enzymatic processing, targeting, and the membrane insertion of nascent chains at the exit of the ribosomal tunnel. This Saccharomyces cerevisiae (strain ATCC 204508 / S288c) (Baker's yeast) protein is Small ribosomal subunit protein uS9A.